The primary structure comprises 473 residues: Cysteine--tRNA ligase (473 aa).

Residue Cys27 participates in Zn(2+) binding. A 'HIGH' region motif is present at residues 29–39; that stretch reads ITPYDHVHVGH. Zn(2+)-binding residues include Cys213, His238, and Glu242. The short motif at 271–275 is the 'KMSKS' region element; that stretch reads KMSKS. Residue Lys274 coordinates ATP.

This sequence belongs to the class-I aminoacyl-tRNA synthetase family. Zn(2+) is required as a cofactor.

The protein localises to the cytoplasm. The catalysed reaction is tRNA(Cys) + L-cysteine + ATP = L-cysteinyl-tRNA(Cys) + AMP + diphosphate. The chain is Cysteine--tRNA ligase from Pyrobaculum calidifontis (strain DSM 21063 / JCM 11548 / VA1).